We begin with the raw amino-acid sequence, 254 residues long: NH(3)-dependent NAD(+) synthetase (254 aa).

Residue 32 to 39 (GISGGVDS) coordinates ATP. D38 lines the Mg(2+) pocket. A deamido-NAD(+)-binding site is contributed by R113. ATP is bound at residue T133. Mg(2+) is bound at residue E138. The deamido-NAD(+) site is built by K146 and D153. Positions 162 and 184 each coordinate ATP. Deamido-NAD(+) is bound at residue 244–245 (HK).

Belongs to the NAD synthetase family. In terms of assembly, homodimer.

It carries out the reaction deamido-NAD(+) + NH4(+) + ATP = AMP + diphosphate + NAD(+) + H(+). The protein operates within cofactor biosynthesis; NAD(+) biosynthesis; NAD(+) from deamido-NAD(+) (ammonia route): step 1/1. In terms of biological role, catalyzes the ATP-dependent amidation of deamido-NAD to form NAD. Uses ammonia as a nitrogen source. The protein is NH(3)-dependent NAD(+) synthetase of Thermococcus sibiricus (strain DSM 12597 / MM 739).